The primary structure comprises 756 residues: 1-phosphatidylinositol 4,5-bisphosphate phosphodiesterase delta-1 (756 aa).

In terms of domain architecture, PH spans 21 to 130; the sequence is ALLKGSQLLK…WVQGLRKIIH (110 aa). A substrate binding region spans residues 30 to 57; sequence KVKSSSWRRERFYKLQEDCKTIWQESRK. 2 consecutive EF-hand domains span residues 140 to 175 and 176 to 211; these read KLQHWIHSCLRKADKNKDNKMNFKELKDFLKELNIQ and VDDGYARKIFRECDHSQTDSLEDEEIETFYKMLTQR. The Ca(2+) site is built by D153, N155, D157, K159, E164, D189, S191, T193, S195, and E200. Residue S191 is glycosylated (O-linked (GlcNAc) serine). The O-linked (GlcNAc) threonine glycan is linked to T193. Residues 296 to 440 enclose the PI-PLC X-box domain; the sequence is QDMDQPLSHY…LKGKILLKGK (145 aa). H311 is an active-site residue. Residues N312, E341, and D343 each coordinate Ca(2+). H356 is an active-site residue. Residue E390 coordinates Ca(2+). Residues K438 and K440 each contribute to the substrate site. The residue at position 457 (T457) is a Phosphothreonine. A Phosphoserine modification is found at S460. Residues 492–609 enclose the PI-PLC Y-box domain; sequence LSDMIIYCKS…GYVLKPAFLR (118 aa). Residues S522 and R549 each contribute to the substrate site. The 129-residue stretch at 609 to 737 folds into the C2 domain; sequence RDPNTTFNSR…QGYRHVHLLS (129 aa). The Ca(2+) site is built by I651, D653, N677, D706, Y707, and D708.

As to quaternary structure, interacts with TGM2. It depends on Ca(2+) as a cofactor.

It catalyses the reaction a 1,2-diacyl-sn-glycero-3-phospho-(1D-myo-inositol-4,5-bisphosphate) + H2O = 1D-myo-inositol 1,4,5-trisphosphate + a 1,2-diacyl-sn-glycerol + H(+). The enzyme catalyses a 1,2-diacyl-sn-glycero-3-phospho-(1D-myo-inositol) + H2O = 1D-myo-inositol 1-phosphate + a 1,2-diacyl-sn-glycerol + H(+). Functionally, the production of the second messenger molecules diacylglycerol (DAG) and inositol 1,4,5-trisphosphate (IP3) is mediated by activated phosphatidylinositol-specific phospholipase C enzymes. Essential for trophoblast and placental development. Binds phosphatidylinositol 4,5-bisphosphate. The sequence is that of 1-phosphatidylinositol 4,5-bisphosphate phosphodiesterase delta-1 from Rattus norvegicus (Rat).